The chain runs to 157 residues: 2-C-methyl-D-erythritol 2,4-cyclodiphosphate synthase (157 aa).

A divalent metal cation contacts are provided by aspartate 8 and histidine 10. 4-CDP-2-C-methyl-D-erythritol 2-phosphate is bound by residues 8–10 and 34–35; these read DVH and HS. Histidine 42 provides a ligand contact to a divalent metal cation. Residues 56–58, 61–65, 100–106, 132–135, phenylalanine 139, and arginine 142 contribute to the 4-CDP-2-C-methyl-D-erythritol 2-phosphate site; these read DIG, FPDTD, AQAPKMA, and TTTE.

The protein belongs to the IspF family. Homotrimer. A divalent metal cation is required as a cofactor.

The catalysed reaction is 4-CDP-2-C-methyl-D-erythritol 2-phosphate = 2-C-methyl-D-erythritol 2,4-cyclic diphosphate + CMP. Its pathway is isoprenoid biosynthesis; isopentenyl diphosphate biosynthesis via DXP pathway; isopentenyl diphosphate from 1-deoxy-D-xylulose 5-phosphate: step 4/6. Involved in the biosynthesis of isopentenyl diphosphate (IPP) and dimethylallyl diphosphate (DMAPP), two major building blocks of isoprenoid compounds. Catalyzes the conversion of 4-diphosphocytidyl-2-C-methyl-D-erythritol 2-phosphate (CDP-ME2P) to 2-C-methyl-D-erythritol 2,4-cyclodiphosphate (ME-CPP) with a corresponding release of cytidine 5-monophosphate (CMP). This chain is 2-C-methyl-D-erythritol 2,4-cyclodiphosphate synthase, found in Edwardsiella ictaluri (strain 93-146).